We begin with the raw amino-acid sequence, 106 residues long: UPF0145 protein CPE0882 (106 aa).

The protein belongs to the UPF0145 family.

The protein is UPF0145 protein CPE0882 of Clostridium perfringens (strain 13 / Type A).